Here is a 429-residue protein sequence, read N- to C-terminus: MPVIEQVGAREILDSRGNPTVEVEVVLIDGTFARAAVPSGASTGEYEAVELRDGDGRYGGKGVKRAVDAVLDEIGPVVIGLNANDQRLIDQELLDLDGTPDKSRLGGNAILGVSLAVAKAAADSAELPLFRYIGGSNAHILPVPMMNILNGGAHADTAVDVQEFMVAPIGAPSFVEALRWGAEVYHALKSVLKKKGLSTGLGDEGGFAPEVAGTTAALDLVTLAIEAAGFKPGADVALALDAAATEFYTDGIGYHFEGMTHTADQMTEFYADLLGSYPLVSIEDPLSEDDWDGWAALTASIGEQVQIVGDDIFATNPERLEEGIGRGVANALLVKVNQIGTLTETLEAVALAHHSGYRTMISHRSGETEDTMIADLVVALGSGQIKTGAPARSERVAKYNQLLRIEEELGDAARYAGDLAFLRYVVETR.

Glutamine 162 serves as a coordination point for (2R)-2-phosphoglycerate. Glutamate 204 (proton donor) is an active-site residue. Mg(2+)-binding residues include aspartate 241, glutamate 283, and aspartate 310. (2R)-2-phosphoglycerate-binding residues include lysine 335, arginine 364, serine 365, and lysine 386. The active-site Proton acceptor is lysine 335.

Belongs to the enolase family. Mg(2+) serves as cofactor.

Its subcellular location is the cytoplasm. The protein localises to the secreted. It is found in the cell surface. The catalysed reaction is (2R)-2-phosphoglycerate = phosphoenolpyruvate + H2O. The protein operates within carbohydrate degradation; glycolysis; pyruvate from D-glyceraldehyde 3-phosphate: step 4/5. Its function is as follows. Catalyzes the reversible conversion of 2-phosphoglycerate (2-PG) into phosphoenolpyruvate (PEP). It is essential for the degradation of carbohydrates via glycolysis. The chain is Enolase from Mycobacterium leprae (strain TN).